The following is a 202-amino-acid chain: ATP-dependent Clp protease proteolytic subunit (202 aa).

The active-site Nucleophile is Ser-101. His-126 is a catalytic residue.

The protein belongs to the peptidase S14 family. In terms of assembly, component of the chloroplastic Clp protease core complex.

The protein resides in the plastid. The protein localises to the chloroplast stroma. The enzyme catalyses Hydrolysis of proteins to small peptides in the presence of ATP and magnesium. alpha-casein is the usual test substrate. In the absence of ATP, only oligopeptides shorter than five residues are hydrolyzed (such as succinyl-Leu-Tyr-|-NHMec, and Leu-Tyr-Leu-|-Tyr-Trp, in which cleavage of the -Tyr-|-Leu- and -Tyr-|-Trp bonds also occurs).. Functionally, cleaves peptides in various proteins in a process that requires ATP hydrolysis. Has a chymotrypsin-like activity. Plays a major role in the degradation of misfolded proteins. In Platanus occidentalis (Sycamore), this protein is ATP-dependent Clp protease proteolytic subunit.